A 794-amino-acid polypeptide reads, in one-letter code: Zinc finger protein 148 (794 aa).

Residue lysine 6 forms a Glycyl lysine isopeptide (Lys-Gly) (interchain with G-Cter in SUMO2) linkage. The residue at position 51 (serine 51) is a Phosphoserine. Residues lysine 88, lysine 115, and lysine 132 each participate in a glycyl lysine isopeptide (Lys-Gly) (interchain with G-Cter in SUMO2) cross-link. The C2H2-type 1 zinc finger occupies 171–193; it reads HVCEHCNAAFRTNYHLQRHVFIH. Phosphothreonine is present on threonine 194. 2 C2H2-type zinc fingers span residues 199–221 and 227–249; these read FQCS…EKIH and FRCD…KRTH. Serine 250 carries the phosphoserine modification. The C2H2-type 4 zinc-finger motif lies at 255 to 278; it reads YQCEYCLQYFSRTDRVLKHKRMCH. A Glycyl lysine isopeptide (Lys-Gly) (interchain with G-Cter in SUMO2) cross-link involves residue lysine 291. The tract at residues 298 to 338 is disordered; the sequence is EEDSGFSTSPKDNSLPKKKRQKTEKKSSGMDKESSLDKSDL. Phosphoserine is present on residues serine 301 and serine 306. Lysine 308 participates in a covalent cross-link: Glycyl lysine isopeptide (Lys-Gly) (interchain with G-Cter in SUMO2). Residues 321–338 are compositionally biased toward basic and acidic residues; it reads EKKSSGMDKESSLDKSDL. Residue lysine 356 forms a Glycyl lysine isopeptide (Lys-Gly) (interchain with G-Cter in SUMO1); alternate linkage. Lysine 356 is covalently cross-linked (Glycyl lysine isopeptide (Lys-Gly) (interchain with G-Cter in SUMO2); alternate). Residue lysine 402 forms a Glycyl lysine isopeptide (Lys-Gly) (interchain with G-Cter in SUMO2) linkage. Residue serine 412 is modified to Phosphoserine. Glycyl lysine isopeptide (Lys-Gly) (interchain with G-Cter in SUMO2) cross-links involve residues lysine 421 and lysine 424. The span at 575-588 shows a compositional bias: polar residues; sequence SSEVPEVTQSENVG. Positions 575-596 are disordered; the sequence is SSEVPEVTQSENVGSSSQASSS. Lysine 607 is subject to N6-acetyllysine. Phosphoserine is present on residues serine 665 and serine 784. A disordered region spans residues 775-794; sequence NDNRAGMTSSPDATTGQTFG.

The protein belongs to the krueppel C2H2-type zinc-finger protein family. As to quaternary structure, interacts with HNRNPDL. Interacts with the 5FMC complex; the interaction requires association with CHTOP. Interacts with CAVIN1. Post-translationally, sumoylated with SUMO2. Desumoylated by SENP3, resulting in the stimulation of transcription of its target genes.

The protein localises to the nucleus. Its function is as follows. Involved in transcriptional regulation. Represses the transcription of a number of genes including gastrin, stromelysin and enolase. Binds to the G-rich box in the enhancer region of these genes. The sequence is that of Zinc finger protein 148 (ZNF148) from Bos taurus (Bovine).